The following is a 32-amino-acid chain: Protamine-1 (32 aa).

Positions 1–32 (PRRRRASSGRPVRRRRRPKMSRRRRRGGRRRR) are disordered.

As to expression, testis.

The protein resides in the nucleus. It localises to the chromosome. Functionally, protamines substitute for histones in the chromatin of sperm during the haploid phase of spermatogenesis. They compact sperm DNA into a highly condensed, stable and inactive complex. The polypeptide is Protamine-1 (Esox lucius (Northern pike)).